A 281-amino-acid polypeptide reads, in one-letter code: Rhomboid protease AarA (281 aa).

A run of 7 helical transmembrane segments spans residues 16–36 (FSLG…AVYF), 76–96 (MLHS…VIGI), 105–125 (FKLL…SAYW), 145–165 (IGVG…IYLI), 185–205 (QLYN…QSGV), 208–228 (AAHI…ILVP), and 233–253 (VANL…IYLY). S150 functions as the Nucleophile in the catalytic mechanism. Residue H210 is the Charge relay system of the active site.

It belongs to the peptidase S54 family.

It localises to the cell membrane. The enzyme catalyses Cleaves type-1 transmembrane domains using a catalytic dyad composed of serine and histidine that are contributed by different transmembrane domains.. In terms of biological role, rhomboid serine protease that catalyzes intramembrane proteolysis. Mediates quorum-sensing and the subsequent regulation of target genes via activation of the Tat protein export system. Catalyzes the proteolytic activation of TatA by removal of its N-terminal extension. In Providencia stuartii, this protein is Rhomboid protease AarA (aarA).